A 395-amino-acid polypeptide reads, in one-letter code: Carbohydrate sulfotransferase 6 (395 aa).

Topologically, residues methionine 1 to arginine 5 are cytoplasmic. A helical; Signal-anchor for type II membrane protein membrane pass occupies residues valine 6 to valine 26. Residues serine 27 to asparagine 395 are Lumenal-facing. Tryptophan 49–phenylalanine 55 serves as a coordination point for 3'-phosphoadenylyl sulfate. An N-linked (GlcNAc...) asparagine glycan is attached at asparagine 116. Arginine 202–serine 210 serves as a coordination point for 3'-phosphoadenylyl sulfate. N-linked (GlcNAc...) asparagine glycosylation is found at asparagine 229, asparagine 305, and asparagine 328.

Belongs to the sulfotransferase 1 family. Gal/GlcNAc/GalNAc subfamily. Expressed in cornea. Mainly expressed in brain. Also expressed in spinal cord and trachea.

It localises to the golgi apparatus membrane. The catalysed reaction is 3'-phosphoadenylyl sulfate + keratan = adenosine 3',5'-bisphosphate + keratan 6'-sulfate.. Its function is as follows. Sulfotransferase that utilizes 3'-phospho-5'-adenylyl sulfate (PAPS) as sulfonate donor to catalyze the transfer of sulfate to position 6 of non-reducing N-acetylglucosamine (GlcNAc) residues of keratan. Cooperates with B4GALT4 galactosyltransferase and B3GNT7 N-acetylglucosaminyltransferase to construct and elongate the sulfated disaccharide unit [-&gt;3Galbeta1-&gt;4(6-sulfoGlcNAcbeta)1-&gt;] within keratan sulfate polymer. Involved in biosynthesis of keratan sulfate in cornea, with an impact on proteoglycan fibril organization and corneal transparency. Involved in sulfation of endothelial mucins such as GLYCAM1. This is Carbohydrate sulfotransferase 6 from Homo sapiens (Human).